We begin with the raw amino-acid sequence, 500 residues long: L-arabinose isomerase (500 aa).

Residues E306, E333, H350, and H450 each coordinate Mn(2+).

It belongs to the arabinose isomerase family. Homohexamer. The cofactor is Mn(2+).

The catalysed reaction is beta-L-arabinopyranose = L-ribulose. Its pathway is carbohydrate degradation; L-arabinose degradation via L-ribulose; D-xylulose 5-phosphate from L-arabinose (bacterial route): step 1/3. In terms of biological role, catalyzes the conversion of L-arabinose to L-ribulose. The sequence is that of L-arabinose isomerase from Yersinia pseudotuberculosis serotype O:3 (strain YPIII).